The following is a 239-amino-acid chain: Calcium load-activated calcium channel (239 aa).

Topologically, residues 1-55 (MPRKRKCDLRAVRVGLLLGGGGVYGSRFRFTFPGCRALSPWRVRVQRRRCEMSTM) are lumenal. Residues 56–83 (FADTLLIVFISVCTALLAEGITWVLVYR) form a helical membrane-spanning segment. Residues 83-140 (RTDKYKRLKAEVEKQSKKLEKKKETITESAGRQQKKKIERQEEKLKNNNRDLSMVRMK) adopt a coiled-coil conformation. Residues 84–137 (TDKYKRLKAEVEKQSKKLEKKKETITESAGRQQKKKIERQEEKLKNNNRDLSMV) lie on the Cytoplasmic side of the membrane. A Phosphoserine modification is found at S111. A helical membrane pass occupies residues 138–157 (RMKSMFAIGFCFTALMGMFN). Residues 158 to 171 (SIFDGRVVAKLPFT) lie on the Lumenal side of the membrane. An intramembrane segment occupies 172-181 (PLSYIQGLSH). Residues 182-191 (RNLLGDDTTD) are Lumenal-facing. A helical membrane pass occupies residues 192–213 (CSFIFLYILCTMSIRQNIQKIL). Residues 214 to 239 (GLAPSRAATKQAGGFLGPPPPSGKFS) are Cytoplasmic-facing. S239 is subject to Phosphoserine.

The protein belongs to the TMCO1 family. Homodimer and homotetramer. Homodimer under resting conditions; forms homotetramers following ER calcium overload. Component of the GET- and EMC-like (GEL) complex, composed of RAB5IF/OPTI and TMCO1. The GEL complex is part of the multi-pass translocon (MPT) complex, composed of three subcomplexes, the GEL complex (composed of RAB5IF/OPTI and TMCO1), the BOS complex (composed of NCLN/Nicalin, NOMO and TMEM147) and the PAT complex (composed of WDR83OS/Asterix and CCDC47). The MPT complex associates with the SEC61 complex. As to expression, widely expressed in adult and fetal tissues, with higher levels in thymus, prostate, testis and small intestine and lower levels in brain, placenta, lung and kidney. Present in most tissues in the eye, including the trabecular meshwork and retina (at protein level).

It localises to the endoplasmic reticulum membrane. The protein localises to the golgi apparatus membrane. It is found in the mitochondrion membrane. It carries out the reaction Ca(2+)(in) = Ca(2+)(out). Its function is as follows. Endoplasmic reticulum (ER) calcium-selective channel preventing intracellular Ca2(+) stores from overfilling and maintaining calcium homeostasis in the ER. In response to endoplasmic reticulum (ER) Ca2(+) overloading, assembles into a homotetramer, forming a functional calcium-selective channel facilitating Ca2(+) release. Mediates ER Ca2(+) homeostasis in osteoblasts and plays a key role in bone formation, via the CaMKII-HDAC4-RUNX2 signaling axis. Component of the multi-pass translocon (MPT) complex that mediates insertion of multi-pass membrane proteins into the lipid bilayer of membranes. The MPT complex takes over after the SEC61 complex: following membrane insertion of the first few transmembrane segments of proteins by the SEC61 complex, the MPT complex occludes the lateral gate of the SEC61 complex to promote insertion of subsequent transmembrane regions. Within the MPT complex, the GEL subcomplex may mediate insertion of transmembrane regions into the membrane. In Homo sapiens (Human), this protein is Calcium load-activated calcium channel.